Here is an 87-residue protein sequence, read N- to C-terminus: MASQTNKELFVGGLARILKEQRQVDVRLKAGDSDQKGVSISAHKLVLSARSEVFKMILETEEIKATTTLDTITLSELKHTELVALVE.

Residues 24-87 form the BTB domain; it reads VDVRLKAGDS…KHTELVALVE (64 aa).

The protein operates within protein modification; protein ubiquitination. Functionally, may act as a substrate-specific adapter of an E3 ubiquitin-protein ligase complex (CUL3-RBX1-BTB) which mediates the ubiquitination and subsequent proteasomal degradation of target proteins. In Arabidopsis thaliana (Mouse-ear cress), this protein is Putative BTB/POZ domain-containing protein At3g29740.